A 1168-amino-acid polypeptide reads, in one-letter code: Probable pre-mRNA-splicing factor ATP-dependent RNA helicase DEAH5 (1168 aa).

Positions isoleucine 76–glycine 206 are disordered. 2 stretches are compositionally biased toward basic and acidic residues: residues proline 81–serine 172 and glycine 180–glycine 206. Residues tyrosine 214–arginine 283 form the S1 motif domain. The segment at threonine 289–glycine 326 is disordered. Serine 411 carries the phosphoserine modification. In terms of domain architecture, Helicase ATP-binding spans isoleucine 525–proline 688. Glycine 538–threonine 545 serves as a coordination point for ATP. The DEAH box motif lies at aspartate 635–histidine 638. The Helicase C-terminal domain occupies tyrosine 706–glycine 886.

The protein belongs to the DEAD box helicase family. DEAH subfamily. PRP22 sub-subfamily.

The protein resides in the nucleus. The catalysed reaction is ATP + H2O = ADP + phosphate + H(+). Its function is as follows. May be involved in pre-mRNA splicing. The polypeptide is Probable pre-mRNA-splicing factor ATP-dependent RNA helicase DEAH5 (Arabidopsis thaliana (Mouse-ear cress)).